Here is a 1077-residue protein sequence, read N- to C-terminus: RNA polymerase-associated protein CTR9 (1077 aa).

TPR repeat units lie at residues 56 to 89 (KEHW…FQNS), 138 to 174 (IGNM…EDHR), 183 to 216 (CLFL…NPVL), 218 to 251 (PDPR…NPKN), 298 to 332 (PVLL…SPMI), 338 to 371 (SESS…NEDN), 373 to 405 (LAKL…NESL), 421 to 455 (FDAK…TLAT), 462 to 495 (SRAY…MEFI), 501 to 534 (LEVL…VSDK), 540 to 572 (ITLE…HPAY), 664 to 697 (GKKS…DPFN), 699 to 731 (FAAQ…LDNE), 732 to 764 (DVQL…FDNE), 768 to 801 (PHIL…AKTA), and 830 to 863 (AETL…FREL). A compositionally biased stretch (basic and acidic residues) spans 959-980 (EREAMAISEHNVKDDSDLSDKD). The tract at residues 959-1077 (EREAMAISEH…NDNDDNDGLF (119 aa)) is disordered. Phosphoserine occurs at positions 1015 and 1017. Composition is skewed to acidic residues over residues 1042-1051 (FIEDSDEEEA) and 1063-1077 (DNDE…DGLF).

Component of the PAF1 complex which consists of at least CDC73, CTR9, LEO1, PAF1 and RTF1. Interacts with SPT6. Interacts with FACT subunits POB3 and SPT16.

The protein localises to the nucleus. It localises to the nucleoplasm. In terms of biological role, the PAF1 complex is a multifunctional complex. Involved in transcription initiation via genetic interactions with TATA-binding proteins. Involved in elongation. It regulates 3'-end formation of snR47 by modulating the recruitment or stable association of NRD1 and NAB3 with RNA polymerase II. Also has a role in transcription-coupled histone modification. Required for activation of RAD6 ubiquitin conjugate and the BRE1 ubiquitin ligase which ubiquitinate 'Lys-126' histone H2B. Activates the SET1 histone methyltransferase complex for methylation of 'Lys-4' of histone H3 and for methylation of 'Lys-73' of histone H3 by DOT1 and 'Lys-36' of histone H3 by SET2. In complex with PAF1, required for normal CLN1 and CLN2 G1 cyclin expression in late G1. Also has a role in chromosome segregation where it appears to be involved in microtubule placement. The protein is RNA polymerase-associated protein CTR9 (CTR9) of Saccharomyces cerevisiae (strain ATCC 204508 / S288c) (Baker's yeast).